The chain runs to 382 residues: MKALSILGSTGSIGLSTLDVVRQHPGKFTITGLAEGHDVGLLNEQINEFRPDVVSVRDAASADQLRKLLGTHKPEIFYGIEGAATVAAAEGAEMVVSAIVGAAGLVPTVSAIKAGKHIALANKETLVVAGQLVSDLVKKHNVQLLPVDSEHSAIFQSLAGHRTEDIERIILTASGGPFRKTPAEELKLAGPEQALKHPQWTMGAKITIDSATLMNKGLEVIEAHWLFNMPAEKIGVVVHPQSIIHSMVEYIDGCVMAQMGVPDMRAPIAYALAWPERCGTGIGKLDLAKIGTLTFEEPDMERFPALRLAFDALKAGRTYPAVLNAANEIAVAAFLDKKIGFTDIADTVDKTMQAHEAYAPVELDEYLQADRWAREKAREIIG.

NADPH-binding residues include T10, G11, S12, I13, G36, and N122. Residue K123 participates in 1-deoxy-D-xylulose 5-phosphate binding. NADPH is bound at residue E124. D148 serves as a coordination point for Mn(2+). S149, E150, S174, and H197 together coordinate 1-deoxy-D-xylulose 5-phosphate. Position 150 (E150) interacts with Mn(2+). G203 is a binding site for NADPH. Positions 210, 215, 216, and 219 each coordinate 1-deoxy-D-xylulose 5-phosphate. E219 lines the Mn(2+) pocket.

It belongs to the DXR family. Mg(2+) is required as a cofactor. It depends on Mn(2+) as a cofactor.

It catalyses the reaction 2-C-methyl-D-erythritol 4-phosphate + NADP(+) = 1-deoxy-D-xylulose 5-phosphate + NADPH + H(+). It functions in the pathway isoprenoid biosynthesis; isopentenyl diphosphate biosynthesis via DXP pathway; isopentenyl diphosphate from 1-deoxy-D-xylulose 5-phosphate: step 1/6. Catalyzes the NADPH-dependent rearrangement and reduction of 1-deoxy-D-xylulose-5-phosphate (DXP) to 2-C-methyl-D-erythritol 4-phosphate (MEP). The protein is 1-deoxy-D-xylulose 5-phosphate reductoisomerase of Chlorobium limicola (strain DSM 245 / NBRC 103803 / 6330).